Here is a 918-residue protein sequence, read N- to C-terminus: Protein translocase subunit SecA (918 aa).

Residues Q87, 105–109, and D494 each bind ATP; that span reads GEGKT. Residues 863–883 are compositionally biased toward basic and acidic residues; the sequence is KQDDTSPKEYKKIGQEQRAEV. The tract at residues 863–918 is disordered; the sequence is KQDDTSPKEYKKIGQEQRAEVDMFGNELKSNKTKPQVSSTTSSGGGSERRSSRRKK.

It belongs to the SecA family. In terms of assembly, monomer and homodimer. Part of the essential Sec protein translocation apparatus which comprises SecA, SecYEG and auxiliary proteins SecDF. Other proteins may also be involved.

It localises to the cell inner membrane. Its subcellular location is the cytoplasm. The enzyme catalyses ATP + H2O + cellular proteinSide 1 = ADP + phosphate + cellular proteinSide 2.. Part of the Sec protein translocase complex. Interacts with the SecYEG preprotein conducting channel. Has a central role in coupling the hydrolysis of ATP to the transfer of proteins into and across the cell membrane, serving as an ATP-driven molecular motor driving the stepwise translocation of polypeptide chains across the membrane. In Leptospira biflexa serovar Patoc (strain Patoc 1 / Ames), this protein is Protein translocase subunit SecA.